The primary structure comprises 159 residues: Large ribosomal subunit protein uL22 (159 aa).

The interval 129 to 159 is disordered; sequence VEGQQKAKMARQKAVTSVVKAPSKTQGGVQK.

Belongs to the universal ribosomal protein uL22 family. As to quaternary structure, part of the 50S ribosomal subunit.

Its function is as follows. This protein binds specifically to 23S rRNA; its binding is stimulated by other ribosomal proteins, e.g. L4, L17, and L20. It is important during the early stages of 50S assembly. It makes multiple contacts with different domains of the 23S rRNA in the assembled 50S subunit and ribosome. Functionally, the globular domain of the protein is located near the polypeptide exit tunnel on the outside of the subunit, while an extended beta-hairpin is found that lines the wall of the exit tunnel in the center of the 70S ribosome. This Mycoplasma pneumoniae (strain ATCC 29342 / M129 / Subtype 1) (Mycoplasmoides pneumoniae) protein is Large ribosomal subunit protein uL22 (rplV).